Consider the following 887-residue polypeptide: CWF19-like protein 2 (887 aa).

The tract at residues M1–S143 is disordered. The stretch at A11–E103 forms a coiled coil. Over residues I14 to E72 the composition is skewed to basic and acidic residues. The residue at position 71 (S71) is a Phosphoserine. Basic residues predominate over residues K73–C98. A compositionally biased stretch (low complexity) spans Q99–S110. A compositionally biased stretch (basic and acidic residues) spans S124–S143. Positions S164–K254 form a coiled coil. K168 participates in a covalent cross-link: Glycyl lysine isopeptide (Lys-Gly) (interchain with G-Cter in SUMO2). 2 disordered regions span residues L315–E370 and S405–E447. The segment covering C342 to Q352 has biased composition (basic and acidic residues). 2 positions are modified to phosphoserine: S354 and S366. The span at R414–L430 shows a compositional bias: basic and acidic residues. The segment covering W433–T442 has biased composition (polar residues). S478 is modified (phosphoserine). Positions I495–M524 form a coiled coil. Residue K597 forms a Glycyl lysine isopeptide (Lys-Gly) (interchain with G-Cter in SUMO2) linkage. S622 is subject to Phosphoserine.

Belongs to the CWF19 family.

The polypeptide is CWF19-like protein 2 (Cwf19l2) (Mus musculus (Mouse)).